The sequence spans 119 residues: Holo-[acyl-carrier-protein] synthase (119 aa).

2 residues coordinate Mg(2+): D7 and E53.

It belongs to the P-Pant transferase superfamily. AcpS family. Requires Mg(2+) as cofactor.

The protein resides in the cytoplasm. It carries out the reaction apo-[ACP] + CoA = holo-[ACP] + adenosine 3',5'-bisphosphate + H(+). Transfers the 4'-phosphopantetheine moiety from coenzyme A to a Ser of acyl-carrier-protein. The protein is Holo-[acyl-carrier-protein] synthase of Dehalococcoides mccartyi (strain ATCC BAA-2266 / KCTC 15142 / 195) (Dehalococcoides ethenogenes (strain 195)).